We begin with the raw amino-acid sequence, 482 residues long: Cardiolipin synthase (482 aa).

2 helical membrane passes run 4-24 (LAYLLVVLLILNVFFAAVTVF) and 34-54 (WAWLLVLTFVPIFGFIIYLIF). 2 PLD phosphodiesterase domains span residues 217 to 244 (LNYRNHRKLAIIDGDISYIGGFNIGDEY) and 395 to 422 (DNGFIHAKTLVVDGEIASVGTANMDFRS). Active-site residues include His-222, Lys-224, Asp-229, His-400, Lys-402, and Asp-407.

This sequence belongs to the phospholipase D family. Cardiolipin synthase subfamily.

It is found in the cell membrane. The enzyme catalyses 2 a 1,2-diacyl-sn-glycero-3-phospho-(1'-sn-glycerol) = a cardiolipin + glycerol. In terms of biological role, catalyzes the reversible phosphatidyl group transfer from one phosphatidylglycerol molecule to another to form cardiolipin (CL) (diphosphatidylglycerol) and glycerol. This is Cardiolipin synthase (cls) from Listeria welshimeri serovar 6b (strain ATCC 35897 / DSM 20650 / CCUG 15529 / CIP 8149 / NCTC 11857 / SLCC 5334 / V8).